The primary structure comprises 329 residues: tRNA(Ile)-lysidine synthase, chloroplastic (329 aa).

Position 32 to 37 (32 to 37 (SGGQDS)) interacts with ATP.

The protein belongs to the tRNA(Ile)-lysidine synthase family.

It localises to the plastid. It is found in the chloroplast. It catalyses the reaction cytidine(34) in tRNA(Ile2) + L-lysine + ATP = lysidine(34) in tRNA(Ile2) + AMP + diphosphate + H(+). In terms of biological role, ligates lysine onto the cytidine present at position 34 of the AUA codon-specific tRNA(Ile) that contains the anticodon CAU, in an ATP-dependent manner. Cytidine is converted to lysidine, thus changing the amino acid specificity of the tRNA from methionine to isoleucine. This is tRNA(Ile)-lysidine synthase, chloroplastic from Pyropia yezoensis (Susabi-nori).